We begin with the raw amino-acid sequence, 208 residues long: Porimin (208 aa).

A signal peptide spans 1–26 (MGLGARGAWAALLLGTLQVLALLGAA). Topologically, residues 27 to 166 (HESAAMAASA…EAKKGSKFDT (140 aa)) are extracellular. The span at 42 to 57 (GLPHNSSANSTETLQH) shows a compositional bias: polar residues. The disordered stretch occupies residues 42–125 (GLPHNSSANS…PKTTSVSQNT (84 aa)). Residues N46, N50, N64, N68, N83, N96, and N106 are each glycosylated (N-linked (GlcNAc...) asparagine). The span at 65 to 107 (ETSNSTVKPPTSVASDSSNTTVTTMKPTAASNTTTPGMVSTNM) shows a compositional bias: polar residues. A compositionally biased stretch (low complexity) spans 108-122 (TSTTLKSTPKTTSVS). N-linked (GlcNAc...) asparagine glycosylation is found at N124 and N138. A helical membrane pass occupies residues 167 to 187 (GSFVGGIVLTLGVLSILYIGC). The Cytoplasmic segment spans residues 188-208 (KMYYSRRGIRYRTIDEHDAII).

It belongs to the CD164 family. In terms of tissue distribution, ubiquitous. Not expressed in ovary. Expressed in keratinocytes.

The protein localises to the membrane. In terms of biological role, implicated in oncotic cell death, characterized by cell swelling, organelle swelling, vacuolization and increased membrane permeability. The protein is Porimin (TMEM123) of Homo sapiens (Human).